Here is a 709-residue protein sequence, read N- to C-terminus: Nucleobase-ascorbate transporter 11 (709 aa).

2 disordered regions span residues 1-28 and 58-167; these read MDSGSGFDPDTGNNKGNGSGGGNGYGER and TGFV…SEDG. The span at 15-25 shows a compositional bias: gly residues; sequence KGNGSGGGNGY. Residues 65–74 show a composition bias toward polar residues; it reads SGETSTSTRT. 3 stretches are compositionally biased toward basic and acidic residues: residues 75–89, 108–132, and 142–151; these read KFGESSDFDLPKGRD, NRPEIEHVTGSEPVSREEEERRLNR, and EGGKINKDLE. Helical transmembrane passes span 196–216, 222–242, 246–266, 288–308, 310–330, 336–356, 369–389, 454–474, 532–552, 555–575, 590–610, and 642–662; these read YLSLVGSLVFIPLVIVPAMDG, ASVISTMLLLTGVTTILHCYF, LPLVQGSSFVYLAPVLVVINS, IIVGSLFQCILGFSGLMSLLL, FINPVVVAPTVAAVGLAFFSY, GTCVEISVPLILLLLIFTLYL, IYAVPLSALLIWTYAFFLTVG, IIMIFVSLVASVDSVGTYHSA, LVIGAMFLIVLSFLGKLGAIL, IPQALAASVLCFIWALTVSLG, ITIVGVSLFLGLSIPAYFQQY, and FAMNAVLSLNMVVTFLLAFIL.

The protein belongs to the nucleobase:cation symporter-2 (NCS2) (TC 2.A.40) family. In terms of tissue distribution, expressed in leaf primordia and vasculature of pedicels, rosette leaves, sepals, carpels and siliques. Expressed in the root central cylinder.

It localises to the membrane. This chain is Nucleobase-ascorbate transporter 11 (NAT11), found in Arabidopsis thaliana (Mouse-ear cress).